A 120-amino-acid chain; its full sequence is Large ribosomal subunit protein bL20 (120 aa).

This sequence belongs to the bacterial ribosomal protein bL20 family.

Functionally, binds directly to 23S ribosomal RNA and is necessary for the in vitro assembly process of the 50S ribosomal subunit. It is not involved in the protein synthesizing functions of that subunit. The protein is Large ribosomal subunit protein bL20 of Mesoplasma florum (strain ATCC 33453 / NBRC 100688 / NCTC 11704 / L1) (Acholeplasma florum).